Here is a 188-residue protein sequence, read N- to C-terminus: Elongation factor P (188 aa).

It belongs to the elongation factor P family.

It is found in the cytoplasm. It functions in the pathway protein biosynthesis; polypeptide chain elongation. Functionally, involved in peptide bond synthesis. Stimulates efficient translation and peptide-bond synthesis on native or reconstituted 70S ribosomes in vitro. Probably functions indirectly by altering the affinity of the ribosome for aminoacyl-tRNA, thus increasing their reactivity as acceptors for peptidyl transferase. This chain is Elongation factor P, found in Cereibacter sphaeroides (strain KD131 / KCTC 12085) (Rhodobacter sphaeroides).